A 303-amino-acid polypeptide reads, in one-letter code: Probable phytol kinase, chloroplastic (303 aa).

A chloroplast-targeting transit peptide spans 1–49 (MAAAAAWTGAASPNSLLLSRSPPHAAALAPSPGSSMRRRLLLGVGTPAV). 6 helical membrane-spanning segments follow: residues 98 to 118 (VVHV…SNST), 122 to 144 (YFAA…RLYT), 168 to 188 (YVLV…IGIV), 227 to 247 (FISG…LGYI), 254 to 274 (ALGK…VPVT), and 276 to 296 (VVDD…LLFS).

Belongs to the polyprenol kinase family.

Its subcellular location is the plastid. The protein resides in the chloroplast membrane. It carries out the reaction phytol + CTP = phytyl phosphate + CDP + H(+). It participates in cofactor biosynthesis; tocopherol biosynthesis. In terms of biological role, involved in the activation and reutilization of phytol from chlorophyll degradation in plant metabolism, including tocopherol biosynthesis. Catalyzes the conversion of phytol to phytol monophosphate (PMP). The chain is Probable phytol kinase, chloroplastic from Zea mays (Maize).